The sequence spans 842 residues: Alanine--tRNA ligase (842 aa).

The Zn(2+) site is built by histidine 549, histidine 553, cysteine 650, and histidine 654.

This sequence belongs to the class-II aminoacyl-tRNA synthetase family. Requires Zn(2+) as cofactor.

It is found in the cytoplasm. It catalyses the reaction tRNA(Ala) + L-alanine + ATP = L-alanyl-tRNA(Ala) + AMP + diphosphate. Functionally, catalyzes the attachment of alanine to tRNA(Ala) in a two-step reaction: alanine is first activated by ATP to form Ala-AMP and then transferred to the acceptor end of tRNA(Ala). Also edits incorrectly charged Ser-tRNA(Ala) and Gly-tRNA(Ala) via its editing domain. The protein is Alanine--tRNA ligase of Campylobacter jejuni subsp. jejuni serotype O:2 (strain ATCC 700819 / NCTC 11168).